A 242-amino-acid polypeptide reads, in one-letter code: ATP synthase subunit a (242 aa).

Helical transmembrane passes span S29–Y49, F84–T104, I114–V134, F140–I160, M181–L201, and F203–Q223.

Belongs to the ATPase A chain family. F-type ATPases have 2 components, CF(1) - the catalytic core - and CF(0) - the membrane proton channel. CF(1) has five subunits: alpha(3), beta(3), gamma(1), delta(1), epsilon(1). CF(0) has three main subunits: a(1), b(2) and c(9-12). The alpha and beta chains form an alternating ring which encloses part of the gamma chain. CF(1) is attached to CF(0) by a central stalk formed by the gamma and epsilon chains, while a peripheral stalk is formed by the delta and b chains.

It is found in the cell inner membrane. Functionally, key component of the proton channel; it plays a direct role in the translocation of protons across the membrane. This Rickettsia akari (strain Hartford) protein is ATP synthase subunit a.